The sequence spans 236 residues: MTKRYWNIDLEEMMRAGVHFGHGTRKWNPRMAPYISAKRKGIHIINLTRTARFLSEACDLVFDAASRGKQFLIVGTKNKAADLVSRAAIRARCHYVNKKWLGGMLTNWSTTEKRLHKFRDLRTEQKTEGFNRLPKRDAAVLKRQLSRLETYLGGIKYMTGLPDIVIILDQQEEYTALRECITLGIPTISLIDTNCNPDLADISIPANDDAIASIRFILNKLVFAICEGRSSYIQNS.

This sequence belongs to the universal ribosomal protein uS2 family.

The protein resides in the plastid. The protein localises to the chloroplast. The polypeptide is Small ribosomal subunit protein uS2c (rps2) (Olimarabidopsis pumila (Dwarf rocket)).